Here is a 332-residue protein sequence, read N- to C-terminus: Myogenic-determination protein (332 aa).

A disordered region spans residues 22-54 (HNGYGQPTHPGYGFSAYSQQNPIAHPGQNPHQT). The region spanning 161–212 (DRRKAATMRERRRLRKVNEAFEILKRRTSSNPNQRLPKVEILRNAIEYIESL) is the bHLH domain. The span at 293-309 (TTSPIQNKATPSASDTQ) shows a compositional bias: polar residues. The interval 293–332 (TTSPIQNKATPSASDTQSPPSSGATAPTSLHVNFKRKCST) is disordered. Residues 310 to 321 (SPPSSGATAPTS) are compositionally biased toward low complexity.

As to quaternary structure, efficient DNA binding requires dimerization with another bHLH protein.

It localises to the nucleus. In terms of biological role, may play an important role in the early development of muscle. This chain is Myogenic-determination protein (nau), found in Drosophila melanogaster (Fruit fly).